A 161-amino-acid chain; its full sequence is MSKTRAVIPGSFDPITYGHLDIIERSADRFDEIHVCVLKNSSKGGTFDSEERMTLIEESVKHLPNIQVHHFNGLLVDFCDQVGAKTIIRGLRAVSDFEYELRLTSMNKKLNSNIETMYMMTSANYSFISSSIVKEVAAYQADISPFVPPHVERALKKKFNV.

Serine 11 serves as a coordination point for substrate. ATP is bound by residues 11-12 (SF) and histidine 19. Lysine 43, leucine 75, and arginine 89 together coordinate substrate. ATP is bound by residues 90–92 (GLR), glutamate 100, and 125–131 (YSFISSS).

Belongs to the bacterial CoaD family. In terms of assembly, homohexamer. It depends on Mg(2+) as a cofactor.

It is found in the cytoplasm. The enzyme catalyses (R)-4'-phosphopantetheine + ATP + H(+) = 3'-dephospho-CoA + diphosphate. It functions in the pathway cofactor biosynthesis; coenzyme A biosynthesis; CoA from (R)-pantothenate: step 4/5. Reversibly transfers an adenylyl group from ATP to 4'-phosphopantetheine, yielding dephospho-CoA (dPCoA) and pyrophosphate. This chain is Phosphopantetheine adenylyltransferase, found in Staphylococcus epidermidis (strain ATCC 35984 / DSM 28319 / BCRC 17069 / CCUG 31568 / BM 3577 / RP62A).